A 239-amino-acid chain; its full sequence is Protein GrpE (239 aa).

Disordered regions lie at residues 1 to 53 (MIEE…EDLK) and 210 to 239 (GPGQQISQESEEKDKVDKDIDSEGSISEEN). Basic and acidic residues-rich tracts occupy residues 34-53 (NEDKKLPDDNNEKIDAEDLK) and 219-230 (SEEKDKVDKDID).

Belongs to the GrpE family. As to quaternary structure, homodimer.

Its subcellular location is the cytoplasm. Participates actively in the response to hyperosmotic and heat shock by preventing the aggregation of stress-denatured proteins, in association with DnaK and GrpE. It is the nucleotide exchange factor for DnaK and may function as a thermosensor. Unfolded proteins bind initially to DnaJ; upon interaction with the DnaJ-bound protein, DnaK hydrolyzes its bound ATP, resulting in the formation of a stable complex. GrpE releases ADP from DnaK; ATP binding to DnaK triggers the release of the substrate protein, thus completing the reaction cycle. Several rounds of ATP-dependent interactions between DnaJ, DnaK and GrpE are required for fully efficient folding. This chain is Protein GrpE, found in Prochlorococcus marinus (strain MIT 9515).